The chain runs to 215 residues: Riboflavin synthase (215 aa).

Lumazine-binding repeat units lie at residues 1–96 (MFTG…FGGH) and 97–193 (FVSG…YRFL). Residues 4–6 (GII), 47–49 (CLT), 61–66 (DVMPET), 100–102 (GHV), Lys135, 144–146 (SLT), and 158–163 (SLIPHT) each bind 2,4-dihydroxypteridine.

As to quaternary structure, homotrimer. Can interact with 6,7-dimethyl-8-ribityllumazine synthase, forming a lumazine synthase/riboflavin synthase complex, also designated as 'heavy riboflavin synthase complex', which consists of a trimer of riboflavin synthase enclosed within an icosahedral structure composed of 60 subunits of 6,7-dimethyl-8-ribityllumazine synthase.

The enzyme catalyses 2 6,7-dimethyl-8-(1-D-ribityl)lumazine + H(+) = 5-amino-6-(D-ribitylamino)uracil + riboflavin. It functions in the pathway cofactor biosynthesis; riboflavin biosynthesis; riboflavin from 2-hydroxy-3-oxobutyl phosphate and 5-amino-6-(D-ribitylamino)uracil: step 2/2. With respect to regulation, is activated by sulfite ions. In terms of biological role, catalyzes the dismutation of two molecules of 6,7-dimethyl-8-ribityllumazine, resulting in the formation of riboflavin and 5-amino-6-(D-ribitylamino)uracil. In Bacillus subtilis (strain 168), this protein is Riboflavin synthase (ribE).